The following is an 898-amino-acid chain: Chitin synthase 1 (898 aa).

Residues 1 to 154 (MDPRYGAQPM…PPQQGGGIQR (154 aa)) form a disordered region. The segment covering 9–21 (PMPPRRSPSPGHP) has biased composition (pro residues). 2 stretches are compositionally biased toward polar residues: residues 64-75 (DHLSLNAAQSVD) and 136-146 (DVPSEQYQDPP). The next 5 membrane-spanning stretches (helical) occupy residues 441–461 (SAFGFISVLPGAFSAYRYVAL), 540–560 (RWLNGSFFAAIYAIVHFLDFL), 570–590 (FAFFIEFIFNTINMIFAWFAI), 616–636 (ILGVVFTWLYGVFLITCFVLS), and 651–671 (MCWFWAIIMIYLMFAAVFISV). A glycan (N-linked (GlcNAc...) asparagine) is linked at N685. A run of 4 helical transmembrane segments spans residues 697 to 717 (MLIISLMSTYGIWLIASLIML), 726 to 746 (FAQYMLLTPTFTNVLNVYAFC), 825 to 845 (GVVLLWMVTNFGLAAIVLSSA), and 870 to 890 (IVLWSVAGLSAFKFIGAMWFL).

This sequence belongs to the chitin synthase family. Class I subfamily.

The protein localises to the cell membrane. It carries out the reaction [(1-&gt;4)-N-acetyl-beta-D-glucosaminyl](n) + UDP-N-acetyl-alpha-D-glucosamine = [(1-&gt;4)-N-acetyl-beta-D-glucosaminyl](n+1) + UDP + H(+). Functionally, polymerizes chitin, a structural polymer of the cell wall and septum, by transferring the sugar moiety of UDP-GlcNAc to the non-reducing end of the growing chitin polymer. Shows additive effects in septum formation with CHS2, CHS3A, CHS4, CHS5, CHS6 and CHS7. Regulates mycelial growth and conidiation. Involved in virulence and mediates mycotoxin deoxinivalenol (DON) biosynthesis via the regulation of the expression of TRI4, TRI5 and TRI6. The protein is Chitin synthase 1 of Gibberella zeae (strain ATCC MYA-4620 / CBS 123657 / FGSC 9075 / NRRL 31084 / PH-1) (Wheat head blight fungus).